We begin with the raw amino-acid sequence, 424 residues long: D-inositol 3-phosphate glycosyltransferase (424 aa).

Position 21 (H21) interacts with 1D-myo-inositol 3-phosphate. UDP-N-acetyl-alpha-D-glucosamine-binding positions include 27 to 28 and G35; that span reads QP. 1D-myo-inositol 3-phosphate contacts are provided by residues 32 to 37, K90, Y123, T147, and R167; that span reads DAGGMN. R241, K246, and Q299 together coordinate UDP-N-acetyl-alpha-D-glucosamine. 3 residues coordinate Mg(2+): F308, Q309, and A311. UDP-N-acetyl-alpha-D-glucosamine is bound by residues E321 and E329. T335 is a Mg(2+) binding site.

Belongs to the glycosyltransferase group 1 family. MshA subfamily. Homodimer.

It catalyses the reaction 1D-myo-inositol 3-phosphate + UDP-N-acetyl-alpha-D-glucosamine = 1D-myo-inositol 2-acetamido-2-deoxy-alpha-D-glucopyranoside 3-phosphate + UDP + H(+). Its function is as follows. Catalyzes the transfer of a N-acetyl-glucosamine moiety to 1D-myo-inositol 3-phosphate to produce 1D-myo-inositol 2-acetamido-2-deoxy-glucopyranoside 3-phosphate in the mycothiol biosynthesis pathway. The polypeptide is D-inositol 3-phosphate glycosyltransferase (Mycobacterium avium (strain 104)).